Consider the following 236-residue polypeptide: Small ribosomal subunit protein uS2c (236 aa).

This sequence belongs to the universal ribosomal protein uS2 family.

The protein resides in the plastid. It localises to the chloroplast. This Eucalyptus globulus subsp. globulus (Tasmanian blue gum) protein is Small ribosomal subunit protein uS2c (rps2).